A 1275-amino-acid polypeptide reads, in one-letter code: Streptococcal hemoprotein receptor (1275 aa).

A signal peptide spans 1–26; it reads MKKISKCAFVAISALVLIQATQTVKS. An HID 1 region spans residues 61–123; the sequence is GKEYYKHIEK…KKDGDILITF (63 aa). The heme site is built by Thr-87, Arg-196, Tyr-197, and Met-238. Residues 203-269 are HID 2; the sequence is IKALTQQITK…KGFEDVTITV (67 aa). In terms of domain architecture, NEAT 1 spans 369 to 501; that stretch reads LTEGTYTLNF…DMTFSKTVTK (133 aa). LRR repeat units lie at residues 544–567, 568–590, 592–614, 616–638, 639–662, 664–686, 687–710, 712–733, 734–757, 759–781, and 783–804; these read LEQI…LKHA, KNIT…LFSQ, KQLR…TFKS, AQLR…LFQS, LHHL…PFEG, SRLT…ALEP, LTSL…IEKL, ALST…SFKN, LPKL…IFKQ, NQLT…VFPD, and ETLN…VRAL. The region spanning 976–1138 is the NEAT 2 domain; the sequence is LRDGIYYLNA…TTEKAKVVKE (163 aa). Disordered stretches follow at residues 1137 to 1174, 1186 to 1205, and 1210 to 1248; these read KETN…SAAT, KATG…DKAE, and LVRD…ESSS. Over residues 1138 to 1166 the composition is skewed to polar residues; sequence ETNNPQENSHLTSTDQLKGPQNRQQEKTP. Basic and acidic residues-rich tracts occupy residues 1196–1205 and 1210–1229; these read SKTDDTDKAE and LVRD…TKTK. A helical transmembrane segment spans residues 1250 to 1269; the sequence is YHLIAGLSSFMIVALGFIIG.

It is found in the cell membrane. Its activity is regulated as follows. May modulate heme uptake according to heme availability. In the presence of high heme concentrations, NEAT 1 facilitates fast heme delivery to Shp, whereas NEAT 2 serves as a temporary storage for heme on the bacterial surface. When heme availability is limiting, heme from NEAT 2 is transferred back to NEAT 1 and from there to Shp. Its function is as follows. Hemoprotein receptor that plays a central role in the acquisition of host heme, a source of iron during bacterial infection, and is therefore an important virulence factor. Captures host hemoproteins and their iron-containing heme molecules, and transfers the heme to the cell surface heme-binding protein Shp. Plays a pivotal role in iron acquisition and growth under iron-starvation conditions. Uses a cap and release mechanism in which Shr forms a dynamic complex with hemoglobin that enables the gated release of its most labile heme molecule. This mechanism exploits the hemoglobin beta subunit's inherent weaker affinity for heme, allowing S.pyogenes to preferentially capture only heme-saturated forms of hemoglobin that contain iron. In vitro, binds directly to a variety of heme-containing proteins, including hemoglobin, myoglobin, heme albumin and the hemoglobin-haptoglobin complex. It also binds to and acquires heme from methemoglobin, the ferric form of hemoglobin, which is likely to be a physiologically relevant heme source for the hemolytic group A streptococcus (GAS). Seems to have an inherent ability to reduce the ferric heme present in methemoglobin to ferrous heme and to provide a stable environment for the produced ferrous complex. Does not bind apohemoglobin, apohaptoglobin, fibrinogen or streptavidin, indicating that it specifically recognizes hemoproteins. Functionally, in addition to its role in heme acquisition, functions as an adhesin, contributing to host cell adhesion and hence virulence. Specifically binds to extracellular matrix (ECM) components, including fibronectin and laminin, and mediates bacterial attachment to host epithelial cells. This is Streptococcal hemoprotein receptor from Streptococcus pyogenes serotype M1.